A 214-amino-acid chain; its full sequence is GTP-binding protein ypt3 (214 aa).

Position 17-24 (glycine 17–serine 24) interacts with GTP. The Effector region motif lies at serine 39 to phenylalanine 47. Threonine 42 is modified (phosphothreonine). GTP is bound by residues aspartate 65–glutamine 69 and asparagine 123–aspartate 126. S-geranylgeranyl cysteine attachment occurs at residues cysteine 213 and cysteine 214.

Belongs to the small GTPase superfamily. Rab family.

The protein resides in the cell membrane. It localises to the endosome membrane. The protein localises to the golgi apparatus membrane. It is found in the cytoplasm. Its subcellular location is the nucleus. In terms of biological role, has a role in retrograde traffricking of proteins from the endosome to the Golgi. Involved in the secretory pathway where it has a role in acid phosphatase secretion. This is GTP-binding protein ypt3 (ypt3) from Schizosaccharomyces pombe (strain 972 / ATCC 24843) (Fission yeast).